A 206-amino-acid polypeptide reads, in one-letter code: Protein GrpE (206 aa).

Positions 1-64 are disordered; it reads MSKKASMHKE…KALEEAQQQA (64 aa). Residues 46–58 show a composition bias toward basic and acidic residues; sequence SDAKVQELEKALE.

The protein belongs to the GrpE family. As to quaternary structure, homodimer.

The protein localises to the cytoplasm. In terms of biological role, participates actively in the response to hyperosmotic and heat shock by preventing the aggregation of stress-denatured proteins, in association with DnaK and GrpE. It is the nucleotide exchange factor for DnaK and may function as a thermosensor. Unfolded proteins bind initially to DnaJ; upon interaction with the DnaJ-bound protein, DnaK hydrolyzes its bound ATP, resulting in the formation of a stable complex. GrpE releases ADP from DnaK; ATP binding to DnaK triggers the release of the substrate protein, thus completing the reaction cycle. Several rounds of ATP-dependent interactions between DnaJ, DnaK and GrpE are required for fully efficient folding. This Prosthecochloris aestuarii (strain DSM 271 / SK 413) protein is Protein GrpE.